Consider the following 269-residue polypeptide: G-protein coupled receptor homolog C3 (269 aa).

A disulfide bridge connects residues Cys-28 and Cys-107. Transmembrane regions (helical) follow at residues Ile-30–Ser-50, Ile-71–Ser-91, Leu-123–Cys-143, Ile-165–Met-185, and His-200–Ala-220.

It belongs to the G-protein coupled receptor 1 family.

Its subcellular location is the host cell membrane. In Sus scrofa (Pig), this protein is G-protein coupled receptor homolog C3.